Here is a 135-residue protein sequence, read N- to C-terminus: Race-specific elicitor A4 (135 aa).

A signal peptide spans 1-18; it reads MHYTTLLLSTLLVGTALA. A propeptide spanning residues 19–29 is cleaved from the precursor; the sequence is QPTNPPAKTPK. The segment at 19–39 is disordered; that stretch reads QPTNPPAKTPKKAPKTQPYNP. The Chitin-binding type-2 domain maps to 47–111; that stretch reads DTKCMGPKDC…DYPNLSTCPV (65 aa). A disulfide bond links Cys86 and Cys101. The disordered stretch occupies residues 112–135; the sequence is KTPQPKPKKGGVGGKKASVGHPGY.

In terms of biological role, this necrosis-inducing peptide induces a hypersensitive response on Cf-4 tomato genotypes. Race-specific elicitors are compounds which only induce defense responses in genotypes of host plants which are resistant to the pathogenic race that produces the elicitor, but not in susceptible genotypes. The polypeptide is Race-specific elicitor A4 (AVR4) (Passalora fulva (Tomato leaf mold)).